The following is a 215-amino-acid chain: Ion-translocating oxidoreductase complex subunit G (215 aa).

The helical transmembrane segment at 9 to 29 threads the bilayer; it reads GLLLSGFALICTAAVALVNEA. T176 carries the FMN phosphoryl threonine modification.

This sequence belongs to the RnfG family. In terms of assembly, the complex is composed of six subunits: RnfA, RnfB, RnfC, RnfD, RnfE and RnfG. FMN is required as a cofactor.

Its subcellular location is the cell inner membrane. Part of a membrane-bound complex that couples electron transfer with translocation of ions across the membrane. The polypeptide is Ion-translocating oxidoreductase complex subunit G (Shewanella amazonensis (strain ATCC BAA-1098 / SB2B)).